The sequence spans 337 residues: Mitochondrial amidoxime-reducing component 1 (337 aa).

G2 is lipidated: N-myristoyl glycine. The Mitochondrial matrix segment spans residues 2-20 (GAAGSSALARFVLLAQSRP). A helical; Signal-anchor for type II membrane protein membrane pass occupies residues 21-40 (GWLGVAALGLTAVALGAVAW). Residues 41–337 (RRAWPTRRRR…VGDPVYLLGQ (297 aa)) are Cytoplasmic-facing. Mo-molybdopterin-binding residues include K67, S68, and R92. Residues 93-183 (FWLVINQEGN…KSQPYRLVHF (91 aa)) are MOSC N-terminal region. The region spanning 187–335 (MRPRRPHQIA…IKVGDPVYLL (149 aa)) is the MOSC domain. Mo-molybdopterin contacts are provided by T210, S211, R238, N240, S271, R272, C273, and Y317.

In terms of assembly, component of a complex composed of cytochrome b5, NADH-cytochrome b5 reductase and MTARC1. Mo-molybdopterin is required as a cofactor.

The protein localises to the mitochondrion outer membrane. The protein resides in the membrane. The catalysed reaction is N(omega)-hydroxy-L-arginine + 2 Fe(II)-[cytochrome b5] + 2 H(+) = L-arginine + 2 Fe(III)-[cytochrome b5] + H2O. In terms of biological role, catalyzes the reduction of N-oxygenated molecules, acting as a counterpart of cytochrome P450 and flavin-containing monooxygenases in metabolic cycles. As a component of prodrug-converting system, reduces a multitude of N-hydroxylated prodrugs particularly amidoximes, leading to increased drug bioavailability. May be involved in mitochondrial N(omega)-hydroxy-L-arginine (NOHA) reduction, regulating endogenous nitric oxide levels and biosynthesis. Postulated to cleave the N-OH bond of N-hydroxylated substrates in concert with electron transfer from NADH to cytochrome b5 reductase then to cytochrome b5, the ultimate electron donor that primes the active site for substrate reduction. This chain is Mitochondrial amidoxime-reducing component 1, found in Homo sapiens (Human).